A 165-amino-acid polypeptide reads, in one-letter code: MMQLSNDSHCNKHSLLNVMNRFIAAANNMDETIMVPNLLRDVPLEDQESHASVSHNNNNNNEPSFPNKQRDMYEHYLLLKSIKNDMEWGLLKREMAGGASFLEMAVKQEELPQMKGEAVEEGPDLEGQFHYHLHGLFSVLSKLTVQADHLTNRYKREIGGGSLLR.

The interval 46-67 (DQESHASVSHNNNNNNEPSFPN) is disordered.

Belongs to the SPOT14 family.

It localises to the nucleus. It is found in the cytoplasm. Its subcellular location is the cytoskeleton. Involved in stabilization of microtubules. May play a role in the regulation of lipogenesis. The chain is Mid1-interacting protein 1-like from Danio rerio (Zebrafish).